The sequence spans 134 residues: Large ribosomal subunit protein bL19 (134 aa).

The tract at residues 108–134 (KSARIVERSDRSDKAKAQKAAAATAAE) is disordered. Positions 111–123 (RIVERSDRSDKAK) are enriched in basic and acidic residues. Over residues 125-134 (QKAAAATAAE) the composition is skewed to low complexity.

It belongs to the bacterial ribosomal protein bL19 family.

Its function is as follows. This protein is located at the 30S-50S ribosomal subunit interface and may play a role in the structure and function of the aminoacyl-tRNA binding site. In Methylorubrum extorquens (strain PA1) (Methylobacterium extorquens), this protein is Large ribosomal subunit protein bL19.